Here is a 269-residue protein sequence, read N- to C-terminus: UPF0761 membrane protein NTHI0384 (269 aa).

6 helical membrane passes run 32–52 (MLAI…FPVF), 89–109 (MSAV…NNID), 128–148 (FAIY…SIGI), 168–188 (LLSF…YTVV), 203–223 (FLAA…VVTF), and 232–252 (AMAT…VVLV).

Belongs to the UPF0761 family.

It localises to the cell inner membrane. The sequence is that of UPF0761 membrane protein NTHI0384 from Haemophilus influenzae (strain 86-028NP).